We begin with the raw amino-acid sequence, 268 residues long: GTP cyclohydrolase 1 type 2 homolog (268 aa).

Residues H66, H67, D105, H227, and E231 each coordinate a divalent metal cation.

The protein belongs to the GTP cyclohydrolase I type 2/NIF3 family. As to quaternary structure, homohexamer.

The polypeptide is GTP cyclohydrolase 1 type 2 homolog (Clostridium acetobutylicum (strain ATCC 824 / DSM 792 / JCM 1419 / IAM 19013 / LMG 5710 / NBRC 13948 / NRRL B-527 / VKM B-1787 / 2291 / W)).